We begin with the raw amino-acid sequence, 511 residues long: Aminotransferase FGSG_17085 (511 aa).

165–166 (GA) is a pyridoxal 5'-phosphate binding site. Substrate is bound at residue Tyr200. Pyridoxal 5'-phosphate is bound at residue Asp310. Residue Lys339 is modified to N6-(pyridoxal phosphate)lysine. A substrate-binding site is contributed by Gly371. Position 372–373 (372–373 (HT)) interacts with pyridoxal 5'-phosphate.

This sequence belongs to the class-III pyridoxal-phosphate-dependent aminotransferase family. Pyridoxal 5'-phosphate serves as cofactor.

The protein operates within secondary metabolite biosynthesis. Its function is as follows. Aminotransferase; part of the gene cluster that mediates the biosynthesis of the lipopeptide fusaristatin A. Fusaristatin A consists of a polyketide chain linked to three amino acid residues glutamine (Gln), dehydroalanine (dehydro-Ala), and beta-aminoisobutyric acid. The biosynthesis starts with formation of a linear polyketide chain by the highly reducing polyketide synthase PKS6. The gene cluster does not contain an acyl-CoA ligase or an acyl-transferase, and it is therefore predicted that the polyketide is transferred directly to the nonribosomal peptide synthetase NRPS7. Modules 1-3 from NRPS7 incorporate dehydro-Ala, Gln, and beta-aminoisobutyric acid in the compound, which is released by cyclization. The beta-aminoisobutyric acid units are most likely not freely available to the NRPS, but can be synthesized from thymine, which requires a dehydrogenase, a monooxygenase, and an aminotransferase. The fusaristatin A cluster contains a cytochrome P450 monooxygenase (FGSG_08207) and an aminotransferase (FGSG_17085), which theoretically can perform two of the enzymatic steps. The enzymes may however also be involved in biosynthesis of dehydroalanine or modification of the polyketide. The dehydro-Ala residue can be a result of cyclization, where serine is dehydrated. The last gene of the cluster encodes a protein with an A/B barrel domain found in variable enzymes, which hampers functional prediction. The polypeptide is Aminotransferase FGSG_17085 (Gibberella zeae (strain ATCC MYA-4620 / CBS 123657 / FGSC 9075 / NRRL 31084 / PH-1) (Wheat head blight fungus)).